The sequence spans 593 residues: Tectonic-1 (593 aa).

The N-terminal stretch at methionine 1–threonine 22 is a signal peptide. The disordered stretch occupies residues lysine 37–proline 72. Asparagine 41 carries an N-linked (GlcNAc...) asparagine glycan. Residues serine 42–threonine 58 show a composition bias toward polar residues. N-linked (GlcNAc...) asparagine glycosylation occurs at asparagine 303. Residue arginine 486 is modified to Omega-N-methylarginine. Asparagine 536 is a glycosylation site (N-linked (GlcNAc...) asparagine).

It belongs to the tectonic family. In terms of assembly, part of the tectonic-like complex (also named B9 complex).

Its subcellular location is the cytoplasm. The protein localises to the cytoskeleton. It localises to the cilium basal body. The protein resides in the secreted. In terms of biological role, component of the tectonic-like complex, a complex localized at the transition zone of primary cilia and acting as a barrier that prevents diffusion of transmembrane proteins between the cilia and plasma membranes. Regulator of Hedgehog (Hh), required for both activation and inhibition of the Hh pathway in the patterning of the neural tube. During neural tube development, it is required for formation of the most ventral cell types and for full Hh pathway activation. Functions in Hh signal transduction to fully activate the pathway in the presence of high Hh levels and to repress the pathway in the absence of Hh signals. Modulates Hh signal transduction downstream of SMO and RAB23. This is Tectonic-1 (Tctn1) from Mus musculus (Mouse).